Consider the following 516-residue polypeptide: Exodeoxyribonuclease 7 large subunit (516 aa).

It belongs to the XseA family. As to quaternary structure, heterooligomer composed of large and small subunits.

It is found in the cytoplasm. It catalyses the reaction Exonucleolytic cleavage in either 5'- to 3'- or 3'- to 5'-direction to yield nucleoside 5'-phosphates.. Functionally, bidirectionally degrades single-stranded DNA into large acid-insoluble oligonucleotides, which are then degraded further into small acid-soluble oligonucleotides. The sequence is that of Exodeoxyribonuclease 7 large subunit from Chlamydia trachomatis serovar L2 (strain ATCC VR-902B / DSM 19102 / 434/Bu).